The primary structure comprises 122 residues: Large ribosomal subunit protein uL14 (122 aa).

Belongs to the universal ribosomal protein uL14 family. As to quaternary structure, part of the 50S ribosomal subunit. Forms a cluster with proteins L3 and L19. In the 70S ribosome, L14 and L19 interact and together make contacts with the 16S rRNA in bridges B5 and B8.

Functionally, binds to 23S rRNA. Forms part of two intersubunit bridges in the 70S ribosome. The sequence is that of Large ribosomal subunit protein uL14 from Clostridium botulinum (strain 657 / Type Ba4).